The sequence spans 429 residues: C4-dicarboxylate transport protein (429 aa).

Helical transmembrane passes span 9–29, 45–65, 79–99, 149–169, 185–205, 223–243, 308–328, and 356–376; these read VLYV…HFYP, LIKM…IAGM, LLYF…ATHI, GEIL…AHLG, VLFG…FGAM, LIGT…GTIA, IYMT…LTWM, and AATL…ILGI.

Belongs to the dicarboxylate/amino acid:cation symporter (DAACS) (TC 2.A.23) family.

The protein resides in the cell inner membrane. Its function is as follows. Responsible for the transport of dicarboxylates such as succinate, fumarate, and malate from the periplasm across the membrane. In Burkholderia ambifaria (strain ATCC BAA-244 / DSM 16087 / CCUG 44356 / LMG 19182 / AMMD) (Burkholderia cepacia (strain AMMD)), this protein is C4-dicarboxylate transport protein.